The following is a 263-amino-acid chain: Hydroxyethylthiazole kinase (263 aa).

M45 lines the substrate pocket. The ATP site is built by R121 and S167. Substrate is bound at residue G194.

Belongs to the Thz kinase family. The cofactor is Mg(2+).

It carries out the reaction 5-(2-hydroxyethyl)-4-methylthiazole + ATP = 4-methyl-5-(2-phosphooxyethyl)-thiazole + ADP + H(+). It functions in the pathway cofactor biosynthesis; thiamine diphosphate biosynthesis; 4-methyl-5-(2-phosphoethyl)-thiazole from 5-(2-hydroxyethyl)-4-methylthiazole: step 1/1. Functionally, catalyzes the phosphorylation of the hydroxyl group of 4-methyl-5-beta-hydroxyethylthiazole (THZ). The sequence is that of Hydroxyethylthiazole kinase from Vibrio campbellii (strain ATCC BAA-1116).